Reading from the N-terminus, the 156-residue chain is ATP synthase subunit b (156 aa).

A helical transmembrane segment spans residues 3–23 (INFTLLAQALAFAGLIWIIAT).

Belongs to the ATPase B chain family. As to quaternary structure, F-type ATPases have 2 components, F(1) - the catalytic core - and F(0) - the membrane proton channel. F(1) has five subunits: alpha(3), beta(3), gamma(1), delta(1), epsilon(1). F(0) has three main subunits: a(1), b(2) and c(10-14). The alpha and beta chains form an alternating ring which encloses part of the gamma chain. F(1) is attached to F(0) by a central stalk formed by the gamma and epsilon chains, while a peripheral stalk is formed by the delta and b chains.

The protein resides in the cell membrane. Its function is as follows. F(1)F(0) ATP synthase produces ATP from ADP in the presence of a proton or sodium gradient. F-type ATPases consist of two structural domains, F(1) containing the extramembraneous catalytic core and F(0) containing the membrane proton channel, linked together by a central stalk and a peripheral stalk. During catalysis, ATP synthesis in the catalytic domain of F(1) is coupled via a rotary mechanism of the central stalk subunits to proton translocation. Functionally, component of the F(0) channel, it forms part of the peripheral stalk, linking F(1) to F(0). This chain is ATP synthase subunit b, found in Stenotrophomonas maltophilia (strain K279a).